Consider the following 203-residue polypeptide: LexA repressor (203 aa).

The segment at residues 29 to 49 is a DNA-binding region (H-T-H motif); the sequence is VREIGQEVGLSSSSTVHGYLK. Catalysis depends on for autocatalytic cleavage activity residues S126 and K163.

This sequence belongs to the peptidase S24 family. In terms of assembly, homodimer.

The enzyme catalyses Hydrolysis of Ala-|-Gly bond in repressor LexA.. Its function is as follows. Represses a number of genes involved in the response to DNA damage (SOS response), including recA and lexA. In the presence of single-stranded DNA, RecA interacts with LexA causing an autocatalytic cleavage which disrupts the DNA-binding part of LexA, leading to derepression of the SOS regulon and eventually DNA repair. The polypeptide is LexA repressor (Pelotomaculum thermopropionicum (strain DSM 13744 / JCM 10971 / SI)).